The chain runs to 122 residues: Serum amyloid A-2 protein (122 aa).

A signal peptide spans 1–18 (MKPFLSIIFCFLVLGVDS). Position 19 is a pyrrolidone carboxylic acid (Gln-19). The tract at residues 100–122 (ANEWGRSGKDPNFFRPPGLPSKY) is disordered.

It belongs to the SAA family. In terms of assembly, apolipoprotein of the HDL complex. In terms of tissue distribution, expressed by the liver; secreted in plasma.

It is found in the secreted. Functionally, major acute phase reactant. This is Serum amyloid A-2 protein (SAA2) from Mesocricetus auratus (Golden hamster).